A 101-amino-acid polypeptide reads, in one-letter code: ATP-dependent Clp protease adapter protein ClpS (101 aa).

The interval 1–24 is disordered; that stretch reads MVVASAPAKPGSVGQQESASRDAT. Polar residues predominate over residues 13 to 23; that stretch reads VGQQESASRDA.

The protein belongs to the ClpS family. In terms of assembly, binds to the N-terminal domain of the chaperone ClpA.

Its function is as follows. Involved in the modulation of the specificity of the ClpAP-mediated ATP-dependent protein degradation. This chain is ATP-dependent Clp protease adapter protein ClpS, found in Mycobacterium marinum (strain ATCC BAA-535 / M).